The sequence spans 260 residues: Hydroxyethylthiazole kinase 2 (260 aa).

Substrate is bound at residue methionine 40. The ATP site is built by arginine 116 and threonine 161. Alanine 188 contributes to the substrate binding site.

The protein belongs to the Thz kinase family. Mg(2+) serves as cofactor.

It catalyses the reaction 5-(2-hydroxyethyl)-4-methylthiazole + ATP = 4-methyl-5-(2-phosphooxyethyl)-thiazole + ADP + H(+). It functions in the pathway cofactor biosynthesis; thiamine diphosphate biosynthesis; 4-methyl-5-(2-phosphoethyl)-thiazole from 5-(2-hydroxyethyl)-4-methylthiazole: step 1/1. In terms of biological role, catalyzes the phosphorylation of the hydroxyl group of 4-methyl-5-beta-hydroxyethylthiazole (THZ). In Oceanobacillus iheyensis (strain DSM 14371 / CIP 107618 / JCM 11309 / KCTC 3954 / HTE831), this protein is Hydroxyethylthiazole kinase 2.